A 431-amino-acid chain; its full sequence is MATLSVDLEVQAQATRAAARQLAQWSGADRQRLLSAIATTLEQEAPRILAANQADCEAATTEGIAPALYARLKLDADKLAAAIAGVRDLAQLPDPLGQIQIDRELDEGLILQRLTCPVGVLGVIFEARPDAVIQIASLAIKSGNGAILKGGREAICSCQAIVAAIAQALAEQQAPVEAIRLLTSREETLALLKLDRYVDLIIPRGSNSFVRFVQDNTHIPVLGHADGICHLYVDQAAAIEKTVTITVDAKTQYPAACNAIETLLIHEAIAPQFLPVVAAALHEKGVSLRGDAAAQTIVPMEAATEEDWRTEYSDLVLAVRLVPSLDAAIAHINEYGSGHTDAIATEDAAAAAQFFSQVDSAGVYHNCSTRFADGFRYGFGAEVGISTQKLPPRGPVGLEGLVTYKYVLSGDGQIAATYSGAQAKPFLHRDR.

Belongs to the gamma-glutamyl phosphate reductase family.

The protein resides in the cytoplasm. It catalyses the reaction L-glutamate 5-semialdehyde + phosphate + NADP(+) = L-glutamyl 5-phosphate + NADPH + H(+). It functions in the pathway amino-acid biosynthesis; L-proline biosynthesis; L-glutamate 5-semialdehyde from L-glutamate: step 2/2. Its function is as follows. Catalyzes the NADPH-dependent reduction of L-glutamate 5-phosphate into L-glutamate 5-semialdehyde and phosphate. The product spontaneously undergoes cyclization to form 1-pyrroline-5-carboxylate. This chain is Gamma-glutamyl phosphate reductase, found in Synechococcus elongatus (strain ATCC 33912 / PCC 7942 / FACHB-805) (Anacystis nidulans R2).